A 255-amino-acid polypeptide reads, in one-letter code: 3-hydroxyacyl-CoA dehydrogenase type-2 (255 aa).

Serine 14, leucine 16, aspartate 35, aspartate 58, valine 59, and cysteine 85 together coordinate NAD(+). Serine 149 is a substrate binding site. NAD(+) is bound by residues tyrosine 162, lysine 166, phenylalanine 195, and threonine 197. Catalysis depends on tyrosine 162, which acts as the Proton acceptor.

Belongs to the short-chain dehydrogenases/reductases (SDR) family. In terms of assembly, component of mitochondrial ribonuclease P, a complex composed of rswl/MRPP1, scu/MRPP2 and mldr/MRPP3. In terms of tissue distribution, found in many tissues including CNS, imaginal disks and salivary glands. Highest expression in both embryonic gonadal primordia and mature ovaries and testes.

It localises to the mitochondrion. The enzyme catalyses a (3S)-3-hydroxyacyl-CoA + NAD(+) = a 3-oxoacyl-CoA + NADH + H(+). The catalysed reaction is (3S)-3-hydroxybutanoyl-CoA + NAD(+) = acetoacetyl-CoA + NADH + H(+). It catalyses the reaction testosterone + NAD(+) = androst-4-ene-3,17-dione + NADH + H(+). It carries out the reaction 5alpha-androstane-3alpha,17beta-diol + NAD(+) = 17beta-hydroxy-5alpha-androstan-3-one + NADH + H(+). The enzyme catalyses 17beta-estradiol + NAD(+) = estrone + NADH + H(+). The catalysed reaction is ursodeoxycholate + NAD(+) = 7-oxolithocholate + NADH + H(+). It catalyses the reaction 3beta,7beta-dihydroxy-5beta-cholan-24-oate + NAD(+) = 3beta-hydroxy-7-oxo-5beta-cholan-24-oate + NADH + H(+). It carries out the reaction 11-dehydrocorticosterone + NAD(+) = pregn-4-ene-3,11,20,21-tetraone + NADH + H(+). The enzyme catalyses cortisone + NAD(+) = 17alpha-hydroxypregn-4-en-3,11,20-trione-21-al + NADH + H(+). The catalysed reaction is cortisol + NAD(+) = 11beta,17alpha-dihydroxypregn-4-ene-3,20,21-trione + NADH + H(+). It catalyses the reaction 5alpha-pregnan-20beta-ol-3-one + NAD(+) = 5alpha-pregnane-3,20-dione + NADH + H(+). It carries out the reaction 17beta-hydroxy-5alpha-androstan-3-one + NAD(+) = 5alpha-androstan-3,17-dione + NADH + H(+). Functionally, mitochondrial dehydrogenase involved in pathways of fatty acid, and steroid metabolism. Versatile enzyme presenting two types of activity; L-3-hydroxyacyl-CoA dehydrogenase ((3S)-3-hydroxyacyl-CoA dehydrogenase) activity and hydroxysteroid dehydrogenase (HSD) activity with a wide substrate spectrum. As a (3S)-3-hydroxyacyl-CoA dehydrogenase, it functions in the third step of the fatty acid beta-oxidation pathway, a major metabolic process in which fatty acids are oxidized to provide a significant source of energy, while also generating acyl-CoA metabolites used by many metabolic routes. As a HSD, it functions in the degradation pathways of glucocorticoids and sex steroids and epimerization of bile acids; catalyzes the beta-oxidation at position 17 of androgens and estrogens, has 3-alpha-hydroxysteroid dehydrogenase activity with androsterone, and carries out oxidative conversions of 7-beta-hydroxylated bile acids like ursodeoxycholate or isoursodeoxycholate (also known as 3-beta,7-beta-dihydroxy-5-beta-cholan-24-oate or 7-beta-hydroxyisolithocholate, respectively). Also exhibits 20-beta-OH and 21-OH dehydrogenase activities with C21 steroids. Essential for structural and functional integrity of mitochondria. Required for cell survival during embryonic development. May play a role in germline formation. In addition to mitochondrial dehydrogenase activity, moonlights as a component of mitochondrial ribonuclease P, a complex that cleaves tRNA molecules in their 5'-ends. Essential for the structural and functional integrity of mitochondria. Function is essential for pupal development. The sequence is that of 3-hydroxyacyl-CoA dehydrogenase type-2 from Drosophila melanogaster (Fruit fly).